Here is a 364-residue protein sequence, read N- to C-terminus: UDP-N-acetylglucosamine--N-acetylmuramyl-(pentapeptide) pyrophosphoryl-undecaprenol N-acetylglucosamine transferase (364 aa).

UDP-N-acetyl-alpha-D-glucosamine contacts are provided by residues Thr10 to Gly12, Asn124, Ser195, Ile250, and Gln295.

This sequence belongs to the glycosyltransferase 28 family. MurG subfamily.

It is found in the cell membrane. The enzyme catalyses di-trans,octa-cis-undecaprenyl diphospho-N-acetyl-alpha-D-muramoyl-L-alanyl-D-glutamyl-meso-2,6-diaminopimeloyl-D-alanyl-D-alanine + UDP-N-acetyl-alpha-D-glucosamine = di-trans,octa-cis-undecaprenyl diphospho-[N-acetyl-alpha-D-glucosaminyl-(1-&gt;4)]-N-acetyl-alpha-D-muramoyl-L-alanyl-D-glutamyl-meso-2,6-diaminopimeloyl-D-alanyl-D-alanine + UDP + H(+). Its pathway is cell wall biogenesis; peptidoglycan biosynthesis. Cell wall formation. Catalyzes the transfer of a GlcNAc subunit on undecaprenyl-pyrophosphoryl-MurNAc-pentapeptide (lipid intermediate I) to form undecaprenyl-pyrophosphoryl-MurNAc-(pentapeptide)GlcNAc (lipid intermediate II). This chain is UDP-N-acetylglucosamine--N-acetylmuramyl-(pentapeptide) pyrophosphoryl-undecaprenol N-acetylglucosamine transferase, found in Bacillus cytotoxicus (strain DSM 22905 / CIP 110041 / 391-98 / NVH 391-98).